The primary structure comprises 257 residues: NH(3)-dependent NAD(+) synthetase (257 aa).

32-39 provides a ligand contact to ATP; sequence GLSGGVDS. Asp-38 is a binding site for Mg(2+). Arg-113 contacts deamido-NAD(+). Thr-133 lines the ATP pocket. Glu-138 lines the Mg(2+) pocket. Residues Lys-162 and Ser-184 each contribute to the ATP site.

The protein belongs to the NAD synthetase family. In terms of assembly, homodimer.

The catalysed reaction is deamido-NAD(+) + NH4(+) + ATP = AMP + diphosphate + NAD(+) + H(+). It participates in cofactor biosynthesis; NAD(+) biosynthesis; NAD(+) from deamido-NAD(+) (ammonia route): step 1/1. Its function is as follows. Catalyzes the ATP-dependent amidation of deamido-NAD to form NAD. Uses ammonia as a nitrogen source. This is NH(3)-dependent NAD(+) synthetase from Wolinella succinogenes (strain ATCC 29543 / DSM 1740 / CCUG 13145 / JCM 31913 / LMG 7466 / NCTC 11488 / FDC 602W) (Vibrio succinogenes).